The following is a 326-amino-acid chain: Probable cell division protein WhiA (326 aa).

The segment at residues 275–308 (SLEELGALADPPLTKDAIAGRIRRLLALADKRAR) is a DNA-binding region (H-T-H motif).

Belongs to the WhiA family.

Functionally, involved in cell division and chromosome segregation. This Salinispora arenicola (strain CNS-205) protein is Probable cell division protein WhiA.